The following is a 254-amino-acid chain: Alcohol dehydrogenase 1 (254 aa).

10 to 33 (FVAGLGGIGLDTSREIVKSGPKNL) provides a ligand contact to NAD(+). S138 lines the substrate pocket. The active-site Proton acceptor is Y151.

The protein belongs to the short-chain dehydrogenases/reductases (SDR) family. Homodimer.

The catalysed reaction is a primary alcohol + NAD(+) = an aldehyde + NADH + H(+). The enzyme catalyses a secondary alcohol + NAD(+) = a ketone + NADH + H(+). The polypeptide is Alcohol dehydrogenase 1 (Adh1) (Drosophila montana (Fruit fly)).